A 448-amino-acid chain; its full sequence is tRNA modification GTPase MnmE (448 aa).

The (6S)-5-formyl-5,6,7,8-tetrahydrofolate site is built by arginine 25, glutamate 83, and lysine 122. The 155-residue stretch at 218–372 (GFKVAIIGKP…LTQKLQKLLD (155 aa)) folds into the TrmE-type G domain. Residue asparagine 228 participates in K(+) binding. GTP is bound by residues 228–233 (NTGKSS), 247–253 (SDIAGTT), and 272–275 (DTAG). A Mg(2+)-binding site is contributed by serine 232. K(+) contacts are provided by serine 247, isoleucine 249, and threonine 252. Residue threonine 253 coordinates Mg(2+). Lysine 448 provides a ligand contact to (6S)-5-formyl-5,6,7,8-tetrahydrofolate.

This sequence belongs to the TRAFAC class TrmE-Era-EngA-EngB-Septin-like GTPase superfamily. TrmE GTPase family. Homodimer. Heterotetramer of two MnmE and two MnmG subunits. Requires K(+) as cofactor.

It localises to the cytoplasm. Exhibits a very high intrinsic GTPase hydrolysis rate. Involved in the addition of a carboxymethylaminomethyl (cmnm) group at the wobble position (U34) of certain tRNAs, forming tRNA-cmnm(5)s(2)U34. The chain is tRNA modification GTPase MnmE from Nitratiruptor sp. (strain SB155-2).